A 60-amino-acid chain; its full sequence is Large ribosomal subunit protein uL30 (60 aa).

Belongs to the universal ribosomal protein uL30 family. In terms of assembly, part of the 50S ribosomal subunit.

In Symbiobacterium thermophilum (strain DSM 24528 / JCM 14929 / IAM 14863 / T), this protein is Large ribosomal subunit protein uL30.